The primary structure comprises 40 residues: uncharacterized protein (40 aa).

The first 27 residues, 1-27, serve as a signal peptide directing secretion; it reads MFPADVILQCFGFSVGIALVGYVISLF.

This is an uncharacterized protein from Archaeoglobus fulgidus (strain ATCC 49558 / DSM 4304 / JCM 9628 / NBRC 100126 / VC-16).